The primary structure comprises 346 residues: GPALPP motifs-containing protein 1 (346 aa).

2 disordered regions span residues 1–283 and 289–308; these read MARD…ESLM and KLKS…IPFD. Residue Ala2 is modified to N-acetylalanine. Positions 7 to 12 match the GPALPP motif 1 motif; that stretch reads GPALPP. Ser28 is modified (phosphoserine). Positions 32–37 match the GPALPP motif 2 motif; sequence GPALPP. Residues 60–69 are compositionally biased toward acidic residues; that stretch reads GNQESEEEDT. The short motif at 91 to 96 is the GPALPP motif 3 element; it reads GPALPP. Ser104 carries the post-translational modification Phosphoserine. Pro residues predominate over residues 106-115; the sequence is PRPIIGPALP. Positions 111 to 116 match the GPALPP motif 4 motif; sequence GPALPP. A compositionally biased stretch (basic and acidic residues) spans 123–132; it reads QKNDKGREDP. Ser136, Ser141, and Ser146 each carry phosphoserine. Positions 142-152 are enriched in acidic residues; it reads EEAESGEDEDI. Basic and acidic residues-rich tracts occupy residues 169 to 193 and 233 to 267; these read EFEK…KPIT and PADR…KRLA. Lys277 is covalently cross-linked (Glycyl lysine isopeptide (Lys-Gly) (interchain with G-Cter in SUMO2)). A compositionally biased stretch (basic and acidic residues) spans 293-308; sequence KAAEDKNKHQERIPFD. Residue Lys314 forms a Glycyl lysine isopeptide (Lys-Gly) (interchain with G-Cter in SUMO2) linkage.

This is GPALPP motifs-containing protein 1 (Gpalpp1) from Mus musculus (Mouse).